A 472-amino-acid polypeptide reads, in one-letter code: UDP-N-acetylmuramate--L-alanine ligase (472 aa).

121–127 lines the ATP pocket; sequence GTHGKTT.

The protein belongs to the MurCDEF family.

The protein localises to the cytoplasm. The catalysed reaction is UDP-N-acetyl-alpha-D-muramate + L-alanine + ATP = UDP-N-acetyl-alpha-D-muramoyl-L-alanine + ADP + phosphate + H(+). Its pathway is cell wall biogenesis; peptidoglycan biosynthesis. Functionally, cell wall formation. The protein is UDP-N-acetylmuramate--L-alanine ligase of Hahella chejuensis (strain KCTC 2396).